Reading from the N-terminus, the 357-residue chain is Arginine kinase Pro c 2.0101 (357 aa).

The 83-residue stretch at 9–91 (KLEEGFKKLE…FDPIIEDYHK (83 aa)) folds into the Phosphagen kinase N-terminal domain. Residue 64-68 (GVGIY) participates in L-arginine binding. The 238-residue stretch at 119–356 (FVISTRVRCG…LELIKIEKEM (238 aa)) folds into the Phosphagen kinase C-terminal domain. ATP contacts are provided by residues 122–126 (STRVR) and H185. E225 provides a ligand contact to L-arginine. An ATP-binding site is contributed by R229. C271 is an L-arginine binding site. ATP-binding positions include 280–284 (RASVH) and 309–314 (RGTRGE). E314 contributes to the L-arginine binding site.

The protein belongs to the ATP:guanido phosphotransferase family. Glycosylated. As to expression, muscle (at protein level).

It carries out the reaction L-arginine + ATP = N(omega)-phospho-L-arginine + ADP + H(+). Functionally, catalyzes the reversible transfer of high energy ATP gamma-phosphate group to L-arginine. The protein is Arginine kinase Pro c 2.0101 of Procambarus clarkii (Red swamp crayfish).